The primary structure comprises 259 residues: Type III pantothenate kinase (259 aa).

6 to 13 (DVGNTNCT) is a binding site for ATP. Position 107–110 (107–110 (GSDR)) interacts with substrate. Asp109 serves as the catalytic Proton acceptor. Asp129 serves as a coordination point for K(+). Residue Thr132 coordinates ATP. Thr184 provides a ligand contact to substrate.

The protein belongs to the type III pantothenate kinase family. Homodimer. It depends on NH4(+) as a cofactor. Requires K(+) as cofactor.

It localises to the cytoplasm. It catalyses the reaction (R)-pantothenate + ATP = (R)-4'-phosphopantothenate + ADP + H(+). Its pathway is cofactor biosynthesis; coenzyme A biosynthesis; CoA from (R)-pantothenate: step 1/5. Catalyzes the phosphorylation of pantothenate (Pan), the first step in CoA biosynthesis. The protein is Type III pantothenate kinase of Listeria innocua serovar 6a (strain ATCC BAA-680 / CLIP 11262).